Reading from the N-terminus, the 501-residue chain is Cobyric acid synthase (501 aa).

The GATase cobBQ-type domain occupies 251 to 446; it reads NIDIAIIRLS…LHGIFDSEEF (196 aa). The active-site Nucleophile is C332. Residue H438 is part of the active site.

It belongs to the CobB/CobQ family. CobQ subfamily.

It participates in cofactor biosynthesis; adenosylcobalamin biosynthesis. Catalyzes amidations at positions B, D, E, and G on adenosylcobyrinic A,C-diamide. NH(2) groups are provided by glutamine, and one molecule of ATP is hydrogenolyzed for each amidation. In Clostridium botulinum (strain Alaska E43 / Type E3), this protein is Cobyric acid synthase.